A 96-amino-acid polypeptide reads, in one-letter code: Large ribosomal subunit protein bL28 (96 aa).

The protein belongs to the bacterial ribosomal protein bL28 family.

The protein is Large ribosomal subunit protein bL28 of Methylobacterium nodulans (strain LMG 21967 / CNCM I-2342 / ORS 2060).